We begin with the raw amino-acid sequence, 221 residues long: uncharacterized protein (221 aa).

Positions 1 to 22 (MGLDNFTAPSTGTTPAGSPFLR) are disordered. Residues 7–16 (TAPSTGTTPA) are compositionally biased toward polar residues.

It belongs to the IIV-6 259R family.

This is an uncharacterized protein from Invertebrate iridescent virus 3 (IIV-3).